Here is a 471-residue protein sequence, read N- to C-terminus: 5-hydroxytryptamine receptor 2A (471 aa).

Over 1-80 (MEILCEDNIS…LQEKNWSALL (80 aa)) the chain is Extracellular. N-linked (GlcNAc...) asparagine glycosylation is found at asparagine 8, asparagine 38, asparagine 44, asparagine 51, and asparagine 54. Residues 81-97 (TTVVIILTIAGNILVIM) traverse the membrane as a helical segment. At 98 to 111 (AVSLEKKLQNATNY) the chain is on the cytoplasmic side. Residues 112 to 137 (FLMSLAIADMLLGFLVMPVSMLTILY) form a helical membrane-spanning segment. Topologically, residues 138-146 (GYRWPLPSK) are extracellular. Residues 147–171 (LCAIWIYLDVLFSTASIMHLCAISL) form a helical membrane-spanning segment. Residues cysteine 148 and cysteine 227 are joined by a disulfide bond. Aspartate 155 contacts serotonin. The short motif at 172–174 (DRY) is the DRY motif; important for ligand-induced conformation changes element. The Cytoplasmic segment spans residues 172-191 (DRYVAIQNPIHHSRFNSRTK). A helical membrane pass occupies residues 192 to 215 (AFLKIIAVWTISVGISMPIPVFGL). At 216 to 232 (QDDSKVFKEGSCLLADD) the chain is on the extracellular side. The chain crosses the membrane as a helical span at residues 233-258 (NFVLIGSFVAFFIPLTIMVITYFLTI). The Cytoplasmic portion of the chain corresponds to 259-322 (KSLQKEATLC…QSISNEQKAC (64 aa)). The residue at position 280 (serine 280) is a Phosphoserine. Residues 323 to 348 (KVLGIVFFLFVVMWCPFFITNIMAVI) traverse the membrane as a helical segment. Asparagine 343 serves as a coordination point for serotonin. The cysteines at positions 349 and 353 are disulfide-linked. Topologically, residues 349 to 356 (CKESCNEN) are extracellular. A helical membrane pass occupies residues 357 to 382 (VIGALLNVFVWIGYLSSAVNPLVYTL). Positions 376–380 (NPLVY) match the NPxxY motif; important for ligand-induced conformation changes and signaling motif. Topologically, residues 383–471 (FNKTYRSAFS…ETVNEKVSCV (89 aa)) are cytoplasmic. The PDZ-binding motif lies at 469–471 (SCV).

Belongs to the G-protein coupled receptor 1 family. In terms of assembly, interacts (via C-terminus) with MPDZ and PATJ. May interact (via C-terminus) with MPP3, PRDX6, DLG4, DLG1, CASK, APBA1 and MAGI2. Interacts with GRM2 and DRD2; this may affect signaling. As to expression, detected in adult intestine, especially in mucosal epithelium, longitudinal and circular layers of muscularis externa and myenteric plexuses. Highly expressed in Paneth cells, and detected at lower levels in enterocytes (at protein level). Detected in brain cortex.

The protein localises to the cell membrane. It localises to the cell projection. The protein resides in the axon. It is found in the cytoplasmic vesicle. Its subcellular location is the membrane. The protein localises to the caveola. It localises to the dendrite. The protein resides in the presynapse. G-protein coupled receptor activity is regulated by lipids: oleamide increases HTR2A-mediated activity. In terms of biological role, G-protein coupled receptor for 5-hydroxytryptamine (serotonin). Also functions as a receptor for various drugs and psychoactive substances, including mescaline, psilocybin, 1-(2,5-dimethoxy-4-iodophenyl)-2-aminopropane (DOI) and lysergic acid diethylamide (LSD). Ligand binding causes a conformation change that triggers signaling via guanine nucleotide-binding proteins (G proteins) and modulates the activity of downstream effectors. HTR2A is coupled to G(q)/G(11) G alpha proteins and activates phospholipase C-beta, releasing diacylglycerol (DAG) and inositol 1,4,5-trisphosphate (IP3) second messengers that modulate the activity of phosphatidylinositol 3-kinase and promote the release of Ca(2+) ions from intracellular stores, respectively. Beta-arrestin family members inhibit signaling via G proteins and mediate activation of alternative signaling pathways. Affects neural activity, perception, cognition and mood. Plays a role in the regulation of behavior, including responses to anxiogenic situations and psychoactive substances. Plays a role in intestinal smooth muscle contraction, and may play a role in arterial vasoconstriction. In Rattus norvegicus (Rat), this protein is 5-hydroxytryptamine receptor 2A (Htr2a).